Consider the following 634-residue polypeptide: Chaperone protein HtpG (634 aa).

The interval M1–R342 is a; substrate-binding. The b stretch occupies residues E343 to Q559. The tract at residues I560 to A634 is c.

The protein belongs to the heat shock protein 90 family. Homodimer.

It is found in the cytoplasm. In terms of biological role, molecular chaperone. Has ATPase activity. This is Chaperone protein HtpG from Pseudomonas paraeruginosa (strain DSM 24068 / PA7) (Pseudomonas aeruginosa (strain PA7)).